The following is a 743-amino-acid chain: Type VI secretion system spike protein VgrG1 (743 aa).

The protein belongs to the VgrG protein family.

The protein localises to the secreted. It catalyses the reaction L-arginyl-[protein] + NAD(+) = N(omega)-(ADP-D-ribosyl)-L-arginyl-[protein] + nicotinamide + H(+). Its function is as follows. Part of the type VI secretion system specialized secretion system, which delivers several virulence factors in both prokaryotic and eukaryotic cells during infection. Acts directly as an secreted effector with an actin ADP-ribosyltransferase activity that disrupts the host actin cytoskeleton, leading to a decrease in host cell viability and an increase in apoptosis. The protein is Type VI secretion system spike protein VgrG1 (vgrG1) of Aeromonas hydrophila subsp. hydrophila (strain ATCC 7966 / DSM 30187 / BCRC 13018 / CCUG 14551 / JCM 1027 / KCTC 2358 / NCIMB 9240 / NCTC 8049).